The sequence spans 261 residues: Nickel import ATP-binding protein NikD (261 aa).

One can recognise an ABC transporter domain in the interval 6 to 248; that stretch reads LRIEGLTIAT…PRHDATRALV (243 aa). Residue 41–48 coordinates ATP; it reads GASGSGKS.

Belongs to the ABC transporter superfamily. Nickel importer (TC 3.A.1.5.3) family. The complex is composed of two ATP-binding proteins (NikD and NikE), two transmembrane proteins (NikB and NikC) and a solute-binding protein (NikA).

Its subcellular location is the cell inner membrane. It catalyses the reaction Ni(2+)(out) + ATP + H2O = Ni(2+)(in) + ADP + phosphate + H(+). Functionally, part of the ABC transporter complex NikABCDE involved in nickel import. Responsible for energy coupling to the transport system. The polypeptide is Nickel import ATP-binding protein NikD (Rhodospirillum rubrum (strain ATCC 11170 / ATH 1.1.1 / DSM 467 / LMG 4362 / NCIMB 8255 / S1)).